The chain runs to 642 residues: 3D-(3,5/4)-trihydroxycyclohexane-1,2-dione hydrolase (642 aa).

Position 71 (E71) interacts with thiamine diphosphate. The segment at 446-526 is thiamine pyrophosphate binding; that stretch reads SLPGDVQRIW…INILVFDNSG (81 aa). 2 residues coordinate Mg(2+): D497 and N524.

Belongs to the TPP enzyme family. Mg(2+) serves as cofactor. It depends on thiamine diphosphate as a cofactor.

It catalyses the reaction 3D-3,5/4-trihydroxycyclohexane-1,2-dione + H2O = 5-deoxy-D-glucuronate + H(+). It functions in the pathway polyol metabolism; myo-inositol degradation into acetyl-CoA; acetyl-CoA from myo-inositol: step 3/7. In terms of biological role, involved in the cleavage of the C1-C2 bond of 3D-(3,5/4)-trihydroxycyclohexane-1,2-dione (THcHDO) to yield 5-deoxy-glucuronate (5DG). This is 3D-(3,5/4)-trihydroxycyclohexane-1,2-dione hydrolase from Lacticaseibacillus casei (Lactobacillus casei).